A 260-amino-acid polypeptide reads, in one-letter code: Nuclear shuttle protein (260 aa).

The tract at residues 1–29 is disordered; it reads MRRGAYTPRSTPFPRDRRSYNAGKGRSFR. A Bipartite nuclear localization signal motif is present at residues 21 to 42; the sequence is NAGKGRSFRSYRRRGPVRPLAR. Positions 84–100 match the Nuclear localization signal motif; it reads VKTRALSDNRVGDYIKL. The segment at 154–191 is interaction with Arabidopsis thaliana NSI protein; it reads QLFGSINASYADLSIQDPYKDRFTVIRQVSYPVNTEKG.

The protein belongs to the begomovirus nuclear shuttle protein family. In terms of assembly, binds to single-stranded and double-stranded viral DNA. Interacts with the host nuclear shuttle interacting (NSI) protein. This interaction may allow NSP to recruit NSI monomers to the viral genome and thus regulate nuclear export of viral genome by NSP.

Its subcellular location is the host nucleus. The protein localises to the host cytoplasm. It is found in the host cell membrane. Functionally, binds to the genomic viral ssDNA, shuttles it into and out of the cell nucleus. Begomoviruses use 2 proteins to transport their DNA from cell to cell. The nuclear shuttle protein (NSP) shuttles it between nucleus and cytoplasm and the movement protein (MP) probably transports the DNA-NSP complex to the cell periphery and facilitates movement across the cell wall. This is Nuclear shuttle protein from Indian cassava mosaic virus (ICMV).